The primary structure comprises 299 residues: YjeF N-terminal domain-containing protein 3 (299 aa).

One can recognise a YjeF N-terminal domain in the interval Ala74 to Leu287.

Interacts with APOA1. Binds to HDL. In terms of tissue distribution, expressed in theca cells in ovary and in Leydig cells in testis (at protein level). Also expressed in brain and mammary gland.

Functionally, may accelerate cholesterol efflux from endothelial cells to high-density lipoprotein (HDL) and thereby regulates angiogenesis. May orchestrate hematopoietic stem and progenitor cell emergence from the hemogenic endothelium, a type of specialized endothelium manifesting hematopoietic potential. YJEFN3-mediated cholesterol efflux activates endothelial SREBF2, the master transcription factor for cholesterol biosynthesis, which in turn transactivates NOTCH and promotes hematopoietic stem and progenitor cell emergence. May play a role in spermiogenesis and oogenesis. The sequence is that of YjeF N-terminal domain-containing protein 3 (YJEFN3) from Homo sapiens (Human).